The chain runs to 642 residues: DNA gyrase subunit B (642 aa).

Positions Cys-422–Pro-536 constitute a Toprim domain. Glu-428, Asp-501, and Asp-503 together coordinate Mg(2+).

It belongs to the type II topoisomerase family. In terms of assembly, heterotetramer, composed of two GyrA and two GyrB chains. Within the heterotetramer, GyrA contains the active site tyrosine that forms a covalent intermediate with the DNA, while GyrB contributes the cofactor binding sites and catalyzes ATP hydrolysis. Requires Mg(2+) as cofactor. The cofactor is Mn(2+). It depends on Ca(2+) as a cofactor.

The protein localises to the cytoplasm. It catalyses the reaction ATP-dependent breakage, passage and rejoining of double-stranded DNA.. With respect to regulation, pyrrolopyrimidines inhibit both GyrB and its paralog in topoisomerase IV (parE). Functionally, DNA gyrase negatively supercoils closed circular double-stranded DNA in an ATP-dependent manner and also catalyzes the interconversion of other topological isomers of double-stranded DNA rings, including catenanes and knotted rings. The sequence is that of DNA gyrase subunit B from Enterococcus faecalis (strain ATCC 700802 / V583).